Here is a 189-residue protein sequence, read N- to C-terminus: HGPRTase-like protein 1 (189 aa).

The protein belongs to the purine/pyrimidine phosphoribosyltransferase family. Archaeal HPRT subfamily.

Its function is as follows. May catalyze a purine salvage reaction, the substrate is unknown. The protein is HGPRTase-like protein 1 of Natrialba magadii (strain ATCC 43099 / DSM 3394 / CCM 3739 / CIP 104546 / IAM 13178 / JCM 8861 / NBRC 102185 / NCIMB 2190 / MS3) (Natronobacterium magadii).